The following is a 629-amino-acid chain: tRNA uridine 5-carboxymethylaminomethyl modification enzyme MnmG (629 aa).

Residues 13–18 (GGGHAG), Val-125, and Ser-180 contribute to the FAD site. 273–287 (GPRYCPSIEDKVMRF) contacts NAD(+). Gln-370 is an FAD binding site.

The protein belongs to the MnmG family. In terms of assembly, homodimer. Heterotetramer of two MnmE and two MnmG subunits. Requires FAD as cofactor.

It is found in the cytoplasm. NAD-binding protein involved in the addition of a carboxymethylaminomethyl (cmnm) group at the wobble position (U34) of certain tRNAs, forming tRNA-cmnm(5)s(2)U34. This chain is tRNA uridine 5-carboxymethylaminomethyl modification enzyme MnmG, found in Shigella sonnei (strain Ss046).